A 412-amino-acid polypeptide reads, in one-letter code: [Pyruvate dehydrogenase (acetyl-transferring)] kinase isozyme 4, mitochondrial (412 aa).

The 231-residue stretch at 138-368 folds into the Histidine kinase domain; it reads IIEYKDSCTV…DAIIYLKALS (231 aa). ATP contacts are provided by residues 254–261, aspartate 293, 312–313, and 329–334; these read ELFKNAMR, ST, and GFGYGL.

This sequence belongs to the PDK/BCKDK protein kinase family. As to quaternary structure, homodimer. Interacts with the pyruvate dehydrogenase complex subunit DLAT, and is part of the multimeric pyruvate dehydrogenase complex that contains multiple copies of pyruvate dehydrogenase (E1), dihydrolipoamide acetyltransferase (DLAT, E2) and lipoamide dehydrogenase (DLD, E3). In terms of tissue distribution, detected in heart, white adipose tissue and muscle.

It localises to the mitochondrion matrix. It catalyses the reaction L-seryl-[pyruvate dehydrogenase E1 alpha subunit] + ATP = O-phospho-L-seryl-[pyruvate dehydrogenase E1 alpha subunit] + ADP + H(+). Functionally, kinase that plays a key role in regulation of glucose and fatty acid metabolism and homeostasis via phosphorylation of the pyruvate dehydrogenase subunits PDHA1 and PDHA2. This inhibits pyruvate dehydrogenase activity, and thereby regulates metabolite flux through the tricarboxylic acid cycle, down-regulates aerobic respiration and inhibits the formation of acetyl-coenzyme A from pyruvate. Inhibition of pyruvate dehydrogenase decreases glucose utilization and increases fat metabolism in response to prolonged fasting and starvation. Plays an important role in maintaining normal blood glucose levels under starvation, and is involved in the insulin signaling cascade. Via its regulation of pyruvate dehydrogenase activity, plays an important role in maintaining normal blood pH and in preventing the accumulation of ketone bodies under starvation. In the fed state, mediates cellular responses to glucose levels and to a high-fat diet. Regulates both fatty acid oxidation and de novo fatty acid biosynthesis. Plays a role in the generation of reactive oxygen species. Protects detached epithelial cells against anoikis. Plays a role in cell proliferation via its role in regulating carbohydrate and fatty acid metabolism. This Rhinolophus ferrumequinum (Greater horseshoe bat) protein is [Pyruvate dehydrogenase (acetyl-transferring)] kinase isozyme 4, mitochondrial (PDK4).